A 138-amino-acid polypeptide reads, in one-letter code: Basic phospholipase A2 ammodytoxin B (138 aa).

The first 16 residues, 1-16 (MRTLWIVAVCLIGVEG), serve as a signal peptide directing secretion. 7 disulfide bridges follow: Cys42-Cys131, Cys44-Cys60, Cys59-Cys111, Cys65-Cys138, Cys66-Cys104, Cys73-Cys97, and Cys91-Cys102. Tyr43, Gly45, and Gly47 together coordinate Ca(2+). Residue His63 is part of the active site. A Ca(2+)-binding site is contributed by Asp64. The active site involves Asp105.

Belongs to the phospholipase A2 family. Group II subfamily. D49 sub-subfamily. Monomer. Binds to calmodulin, coagulation factor X (F10), M-type PLA2 receptor (R-180), 14-3-3 proteins gamma (YWHAG) and epsilon (YWHAE), and R25, a mitochondrial membrane protein. It depends on Ca(2+) as a cofactor. As to expression, expressed by the venom gland.

The protein resides in the secreted. It is found in the host cytoplasm. The protein localises to the host cytosol. It carries out the reaction a 1,2-diacyl-sn-glycero-3-phosphocholine + H2O = a 1-acyl-sn-glycero-3-phosphocholine + a fatty acid + H(+). In terms of biological role, snake venom phospholipase A2 (PLA2) that acts as a presynaptic neurotoxin, an inhibitor of blood coagulation, and has been found to bind with high affinity to intracellular proteins. The response of indirectly stimulated neuromuscular preparations to ammodytoxin (Atx) is triphasic. The first phase, the transient inhibition of the acetylcholine (ACh) release, starts soon after the addition of Atx and lasts for several minutes. This phase is probably independent of Atx enzymatic activity. The effect may be due to the specific binding of the toxin to presynaptic receptors. These receptors, called N-type receptors, are still unidentified. It is noteworthy that a neuronal isoform of the M-type PLA2 receptor (R180) has been identified as a high-affinity receptor for Atx in neuronal plasma membranes. It was demonstrated however that this receptor is not essential for expression of neurotoxicity by Atx. The second phase corresponds to an augmentation of neurotransmitter release. A peak is reached 10-20 minutes after exposure of the preparation to Atx and is followed by a gradual reduction. In this phase, the enzymatic activity of Atx of the mammalian is not significant. It is speculated that the increased release of neurotransmitter in this phase is induced by the interference of Atx with voltage-gated potassium channels. Measurements of ionic currents showed however that voltage-gated potassium channels are not affected by Atx. The third phase of the response of neuromuscular preparations to Atx, which corresponds to a complete and irreversible paralysis, is clearly dependent on the hydrolytic activity of the toxin. In addition to its presynaptic neurotoxicity, Atx shows an anticoagulant activity by binding with high affinity to activated coagulation factor X (F10) thus inhibiting the formation of the prothrombinase complex (FX/FV) and its activity (IC(50) is 82 nM). Surprisingly, Atx was discovered to bind intracellular proteins such as calmodulin (CaM), 14-3-3 proteins gamma (YWHAG) and epsilon (YWHAE) (by similarity with AtxC), as well as R25 (by similarity with AtxC), a mitochondrial integral membrane protein found in cerebral cortex. These findings raised a doubt about the dogma of the exclusively extracellular action of PLA2s, defended by the potential instability of these molecules in the reducing environment of the eukaryotic cytosol coupled with their possible inability to act as enzymes in this cellular compartment, due to too low concentration of calcium ions. This hypothesis was challenged efficiently by demonstrating the internalization of AtxA into a culture cells, but still remains to be directly demonstrated in vivo. PLA2 catalyzes the calcium-dependent hydrolysis of the 2-acyl groups in 3-sn-phosphoglycerides. The sequence is that of Basic phospholipase A2 ammodytoxin B from Vipera ammodytes ammodytes (Western sand viper).